We begin with the raw amino-acid sequence, 162 residues long: ATP synthase subunit delta, mitochondrial (162 aa).

A mitochondrion-targeting transit peptide spans M1–Y24.

In terms of assembly, F-type ATP synthases have 2 components, the catalytic core F(1) and the membrane-embedded component F(0), linked together by a central stalk and a peripheral stalk. The central stalk, also called rotor shaft, is often seen as part of F(1). The peripheral stalk is seen as part of F(0). F(0) contains the membrane channel next to the rotor. F-type ATP synthases form dimers but each monomer functions independently in ATP generation. The dimer consists of 17 different polypeptides: ATP1 (subunit alpha, 3 molecules per monomer, part of F(1)), ATP2 (subunit beta, 3 copies per monomer, part of F(1)), ATP3 (subunit gamma, part of the central stalk), ATP4 (subunit b, part of the peripheral stalk), ATP5/OSCP (subunit 5/OSCP, part of the peripheral stalk), ATP6 (subunit a, part of the peripheral stalk), ATP7 (subunit d, part of the peripheral stalk), ATP8 (subunit 8, part of the peripheral stalk), OLI1 (subunit c, part of the rotor, 10 molecules per monomer), ATP14 (subunit h, part of the peripheral stalk), ATP15 (subunit epsilon, part of the central stalk), ATP16 (subunit delta, part of the central stalk), ATP17 (subunit f, part of the peripheral stalk), ATP18 (subunit i/j, part of the peripheral stalk), ATP19 (subunit k, dimer-specific, at interface between monomers), ATP20 (subunit g, at interface between monomers), TIM11 (subunit e, at interface between monomers).

Its subcellular location is the mitochondrion inner membrane. Its function is as follows. Mitochondrial membrane ATP synthase (F(1)F(0) ATP synthase or Complex V) produces ATP from ADP in the presence of a proton gradient across the membrane which is generated by electron transport complexes of the respiratory chain. F-type ATP synthases consist of two structural domains, F(1) - containing the extramembraneous catalytic core, and F(0) - containing the membrane proton channel, linked together by a central stalk and a peripheral stalk. During catalysis, ATP synthesis in the catalytic domain of F(1) is coupled via a rotary mechanism of the central stalk subunits to proton translocation. Part of the complex F(1) domain and the central stalk which is part of the complex rotary element. Rotation of the central stalk against the surrounding alpha/ATP1(3)beta/ATP2(3) subunits leads to hydrolysis of ATP in three separate catalytic sites on the beta/ATP2 subunits. This is ATP synthase subunit delta, mitochondrial from Yarrowia lipolytica (strain CLIB 122 / E 150) (Yeast).